Consider the following 202-residue polypeptide: B-cell CLL/lymphoma 7 protein family member B (202 aa).

The segment at 53 to 202 (DSKEKEKSKS…PTVPQTASES (150 aa)) is disordered. Over residues 90–99 (ENSNQSSVSD) the composition is skewed to polar residues. Over residues 107–123 (SSTNSSPSPQQSESLSP) the composition is skewed to low complexity. A phosphoserine mark is found at S114, S118, S120, S122, S127, S148, and S152.

This sequence belongs to the BCL7 family. As to expression, ubiquitous.

In terms of biological role, positive regulator of apoptosis. Plays a role in the Wnt signaling pathway, negatively regulating the expression of Wnt signaling components CTNNB1 and HMGA1. Involved in cell cycle progression, maintenance of the nuclear structure and stem cell differentiation. May play a role in lung tumor development or progression. The polypeptide is B-cell CLL/lymphoma 7 protein family member B (BCL7B) (Homo sapiens (Human)).